We begin with the raw amino-acid sequence, 452 residues long: Mitochondrial distribution and morphology protein 10 (452 aa).

Residues 105–130 (PLAPESWDSDGPGHEGSDGQEDETTP) form a disordered region.

It belongs to the MDM10 family. As to quaternary structure, component of the ER-mitochondria encounter structure (ERMES) or MDM complex, composed of MMM1, MDM10, MDM12 and MDM34. Associates with the mitochondrial outer membrane sorting assembly machinery SAM(core) complex.

Its subcellular location is the mitochondrion outer membrane. In terms of biological role, component of the ERMES/MDM complex, which serves as a molecular tether to connect the endoplasmic reticulum and mitochondria. Components of this complex are involved in the control of mitochondrial shape and protein biogenesis and may function in phospholipid exchange. MDM10 is involved in the late assembly steps of the general translocase of the mitochondrial outer membrane (TOM complex). Functions in the TOM40-specific route of the assembly of outer membrane beta-barrel proteins, including the association of TOM40 with the receptor TOM22 and small TOM proteins. Can associate with the SAM(core) complex as well as the MDM12-MMM1 complex, both involved in late steps of the major beta-barrel assembly pathway, that is responsible for biogenesis of all outer membrane beta-barrel proteins. May act as a switch that shuttles between both complexes and channels precursor proteins into the TOM40-specific pathway. Plays a role in mitochondrial morphology and in the inheritance of mitochondria. The chain is Mitochondrial distribution and morphology protein 10 from Uncinocarpus reesii (strain UAMH 1704).